A 72-amino-acid chain; its full sequence is Threonine dehydratase operon activator protein (72 aa).

Its function is as follows. Probable trans-acting positive activator for the tdc operon. The polypeptide is Threonine dehydratase operon activator protein (tdcR) (Escherichia coli (strain K12)).